The chain runs to 700 residues: Elongation factor G (700 aa).

One can recognise a tr-type G domain in the interval 10-286; it reads NKVRNIGIMA…AVIDYLPNPL (277 aa). GTP-binding positions include 19-26, 83-87, and 137-140; these read AHIDAGKT, DTPGH, and NKMD.

It belongs to the TRAFAC class translation factor GTPase superfamily. Classic translation factor GTPase family. EF-G/EF-2 subfamily.

The protein resides in the cytoplasm. Functionally, catalyzes the GTP-dependent ribosomal translocation step during translation elongation. During this step, the ribosome changes from the pre-translocational (PRE) to the post-translocational (POST) state as the newly formed A-site-bound peptidyl-tRNA and P-site-bound deacylated tRNA move to the P and E sites, respectively. Catalyzes the coordinated movement of the two tRNA molecules, the mRNA and conformational changes in the ribosome. The sequence is that of Elongation factor G from Rhodococcus jostii (strain RHA1).